The chain runs to 160 residues: GPI-anchored protein LLG3 (160 aa).

The signal sequence occupies residues 1 to 23 (MKITHHCLVSLLSILLLSGFAFS). Residue Asn-56 is glycosylated (N-linked (GlcNAc...) asparagine). A lipid anchor (GPI-anchor amidated serine) is attached at Ser-137. Residues 138–160 (HASIPLVSTHVLLITVSILFHLF) constitute a propeptide, removed in mature form.

Expressed in pollen, pollen tubes, sporophytic pistil tissues, in the early stages of female gametophyte development, and in unfertilized, mature ovules.

It is found in the cell membrane. This chain is GPI-anchored protein LLG3, found in Arabidopsis thaliana (Mouse-ear cress).